A 628-amino-acid chain; its full sequence is Glutamyl-tRNA(Gln) amidotransferase subunit E (628 aa).

Belongs to the GatB/GatE family. GatE subfamily. As to quaternary structure, heterodimer of GatD and GatE.

It catalyses the reaction L-glutamyl-tRNA(Gln) + L-glutamine + ATP + H2O = L-glutaminyl-tRNA(Gln) + L-glutamate + ADP + phosphate + H(+). Functionally, allows the formation of correctly charged Gln-tRNA(Gln) through the transamidation of misacylated Glu-tRNA(Gln) in organisms which lack glutaminyl-tRNA synthetase. The reaction takes place in the presence of glutamine and ATP through an activated gamma-phospho-Glu-tRNA(Gln). The GatDE system is specific for glutamate and does not act on aspartate. This is Glutamyl-tRNA(Gln) amidotransferase subunit E from Thermococcus gammatolerans (strain DSM 15229 / JCM 11827 / EJ3).